We begin with the raw amino-acid sequence, 334 residues long: Holliday junction branch migration complex subunit RuvB (334 aa).

Residues 4 to 184 (ADRLIQPQIQ…FGIPLRLEFY (181 aa)) form a large ATPase domain (RuvB-L) region. Residues Arg24, Gly65, Lys68, Thr69, Thr70, 131–133 (EDY), Arg174, Tyr184, and Arg221 each bind ATP. Thr69 provides a ligand contact to Mg(2+). Residues 185 to 255 (NIKDLSTIVT…VAEHALDLLD (71 aa)) are small ATPAse domain (RuvB-S). The segment at 258 to 334 (SEGFDYMDRK…YQHFELIKPE (77 aa)) is head domain (RuvB-H). The DNA site is built by Arg294, Arg313, and Arg318.

Belongs to the RuvB family. As to quaternary structure, homohexamer. Forms an RuvA(8)-RuvB(12)-Holliday junction (HJ) complex. HJ DNA is sandwiched between 2 RuvA tetramers; dsDNA enters through RuvA and exits via RuvB. An RuvB hexamer assembles on each DNA strand where it exits the tetramer. Each RuvB hexamer is contacted by two RuvA subunits (via domain III) on 2 adjacent RuvB subunits; this complex drives branch migration. In the full resolvosome a probable DNA-RuvA(4)-RuvB(12)-RuvC(2) complex forms which resolves the HJ.

Its subcellular location is the cytoplasm. It catalyses the reaction ATP + H2O = ADP + phosphate + H(+). Functionally, the RuvA-RuvB-RuvC complex processes Holliday junction (HJ) DNA during genetic recombination and DNA repair, while the RuvA-RuvB complex plays an important role in the rescue of blocked DNA replication forks via replication fork reversal (RFR). RuvA specifically binds to HJ cruciform DNA, conferring on it an open structure. The RuvB hexamer acts as an ATP-dependent pump, pulling dsDNA into and through the RuvAB complex. RuvB forms 2 homohexamers on either side of HJ DNA bound by 1 or 2 RuvA tetramers; 4 subunits per hexamer contact DNA at a time. Coordinated motions by a converter formed by DNA-disengaged RuvB subunits stimulates ATP hydrolysis and nucleotide exchange. Immobilization of the converter enables RuvB to convert the ATP-contained energy into a lever motion, pulling 2 nucleotides of DNA out of the RuvA tetramer per ATP hydrolyzed, thus driving DNA branch migration. The RuvB motors rotate together with the DNA substrate, which together with the progressing nucleotide cycle form the mechanistic basis for DNA recombination by continuous HJ branch migration. Branch migration allows RuvC to scan DNA until it finds its consensus sequence, where it cleaves and resolves cruciform DNA. This chain is Holliday junction branch migration complex subunit RuvB, found in Shewanella baltica (strain OS195).